The chain runs to 123 residues: UPF0738 protein BCG9842_B4089 (123 aa).

Belongs to the UPF0738 family.

This chain is UPF0738 protein BCG9842_B4089, found in Bacillus cereus (strain G9842).